We begin with the raw amino-acid sequence, 1214 residues long: ATP-dependent helicase/nuclease subunit A (1214 aa).

The region spanning 27 to 483 (HKRTAQQIEA…ILLKENFRSQ (457 aa)) is the UvrD-like helicase ATP-binding domain. 48 to 55 (ASAGSGKT) contacts ATP. Positions 512–800 (QLVAGSEAQK…NLMTIHKSKG (289 aa)) constitute a UvrD-like helicase C-terminal domain.

Belongs to the helicase family. AddA subfamily. In terms of assembly, heterodimer of AddA and AddB/RexB. The cofactor is Mg(2+).

The catalysed reaction is Couples ATP hydrolysis with the unwinding of duplex DNA by translocating in the 3'-5' direction.. The enzyme catalyses ATP + H2O = ADP + phosphate + H(+). Its function is as follows. The heterodimer acts as both an ATP-dependent DNA helicase and an ATP-dependent, dual-direction single-stranded exonuclease. Recognizes the chi site generating a DNA molecule suitable for the initiation of homologous recombination. The AddA nuclease domain is required for chi fragment generation; this subunit has the helicase and 3' -&gt; 5' nuclease activities. The chain is ATP-dependent helicase/nuclease subunit A from Streptococcus equi subsp. zooepidemicus (strain MGCS10565).